The sequence spans 147 residues: Bis(5'-nucleosyl)-tetraphosphatase [asymmetrical] (147 aa).

Ala2 carries the N-acetylalanine modification. One can recognise a Nudix hydrolase domain in the interval 2 to 139; that stretch reads ALRACGLIIF…EMKAALQEGH (138 aa). The short motif at 43-64 is the Nudix box element; that stretch reads GHVEPGESDLETALRETQEEAG.

Belongs to the Nudix hydrolase family. A divalent metal cation is required as a cofactor.

It carries out the reaction P(1),P(4)-bis(5'-guanosyl) tetraphosphate + H2O = GMP + GTP + 2 H(+). The catalysed reaction is a 5'-end CoA-ribonucleoside in mRNA + H2O = a 5'-end phospho-adenosine-phospho-ribonucleoside in mRNA + (R)-4'-phosphopantetheine + 2 H(+). It catalyses the reaction a 5'-end FAD-phospho-ribonucleoside in mRNA + H2O = a 5'-end phospho-adenosine-phospho-ribonucleoside in mRNA + FMN + 2 H(+). Functionally, catalyzes the asymmetric hydrolysis of diadenosine 5',5'''-P1,P4-tetraphosphate (Ap4A) to yield AMP and ATP. Exhibits decapping activity towards FAD-capped RNAs and dpCoA-capped RNAs in vitro. The chain is Bis(5'-nucleosyl)-tetraphosphatase [asymmetrical] (NUDT2) from Bos taurus (Bovine).